The sequence spans 4538 residues: MRWRSNVKKITKQLTLSLKNPFIYHHVVYGQNVLPGLAYIDIIYQIFREHGFSCSELQLRNLSIYQPLTAEQDAVIVLNIQCAEKKEGQWQITAKGIEKRDGKEASEEKLYMKADMHADSPAIFEETLDLSQIKASAQNVVQLDDVYEQCRRQELVHSEYMKAKGCIYEEEDGVLLELSLGSEAMLHAEGFMFHPTLIDGSGVGANHLLTSLLKGEQRLYLPLFYESFSASALLQTDCMTRIKRSSVRREKELIYVTLEFFNASGEKVAELKNFTSKLVREAELISGKHQDAQETQMTRADTAERDKPADMVSSPVNSYSEAEQFVSQLIAEKINKPVEQVEKQVGYYQMGLNSSGLLEVVETISDKIGESLSPTLLFEHTTIAELSAFLAEEYAEHFSAAGSLGQNERARVSDSINDHKTVEGSRPAPIEAAGDIAIIGLAGRYPKAANIHEFWNNLKEGKDCVSEIPESRWDWQRLEGITSPSGKDISKWGGFIDDPDCFDPQFFRITPREAETMDPQERLFLETCWETIEDAGYTPKTLAKPKGRNKRQHVGVFAGVMHKDYTLVGAEEASAENVFPLSLNYAQIANRVSYFCNFHGPSMAVDTVCSSSLTAVHLALESIRHGECDVALAGGVNLSLHPNKYMTYGVWDMFSTDGHCRTFGKDGDGYVPAEGIGAVLLKPLRQAEEDGDRIYAVIKGSAVNHVGTVSGISVPSPVSQADLIETCLEKTGIDPRTISYVEAHGTGTSLGDPIEIQGLVKAFRQYTQDRQFCSIGSVKSNIGHAESAAGISGLSKVALQLHHQKLVPSLHSEELNPYVDFEKSPFYVQHETETWKQPVIKENGEDVPYPRRAGISSFGATGSNAHIILEEHIPQAAEQDVSLSSDSDISAVIPLSARNQERLRVYAKRLLDFLHDGIQIRDLAYTLQVGREPMEERVSFLASGIQELSDQLKAFIEGRKAIQHCWKGRVSRGSEPSRPAESVHKLLEQRKLDQIAEQWANGSGVDWKLLYEGSKPKRISLPTYPFERVRYWVPKAEKKTDRSKQERHILHPLLHQNVSDISGVRFRSAFTGREFFLKDHVIKGEHVLPGAALLEMVRAAVERAAADQFPTGFRLRNIVWVRPFAVTEQQKDIDVRLYPEENGEITFEICRDPESAEESPIVYGQGSAVLCEAGENPVINIEELKASYNGRTLSPFDCYEAYTEMGIHYGDSHRAIDSLYAGENGVLVKLTMPPVISDTEDHYILHPSMIDSAFQASIGLRLGGATSLEDRKAMLPFAIQDVRIFKGCEASMWARITYSEGSTAGDRMQKLDIDLCNEEGQVCVRLTSYSARVLETDQEGPSEANDTLLFEHIWEERAAERQELIEYDTYKVVVCDVGEQMESLQNHLDCTVLQHDTETIDERFEGYAIQLFEEIKQLMHSKTGGHTFIQVAVPALDEPQLLSGLTGLLKTAELENPKLTGQLIEIETGMSAGELFEILEENRRYPRDTHIRHWQGKRFVSKWKEVSGEHLSADMPWKDKGVYLITGGAGGLGFIFATEIANQTNDAVVILTGRSPLDERKKKKLKALQKLGIQAIYRQADLADKQTVDALLKETQNVYGDLDGIIHSAGLIKDNFIMKKKKEEVQTVLAPKVAGLIHLDEATKDIPLDFFILFSSGAGAVGSAGQADYAMANAFMNAFSEYRNGQAELHKRYGKTLSVCWPLWKDGGMQIDAETARMLKRETGMVAMETDRGIQALYHGWTSGKPQVLVASGVTDRIRAFLHETGHGKGQSHNIKKSSLNQEAEKADMIGEIDEEILREKAENYFKQVLSSVIKLPAGQIDAEAPLEDYGIDSIMIMHVTGQLEKVFGSLSKTLFFEYQDIRSLTRYFIDSRREKLLDILGFETGKPSVERKSEPEKQEIPVIPRKSGFLPLQDKEQKQVREKETEEIAIIGISGRYPQADNIDELWEKLRDGRDCITEIPADRWDHSLYYDEDKDKPGKTYSKWGGFMKDVDKFDPQFFHISPREAKLMDPQERLFLQCVYETMEDAGYTREHLGRKRDAELGGSVGVYVGVMYEEYQLYGAQEQVRGRSLALTGNPSSIANRVSYYFDFHGPSIALDTMCSSSLTAIHLACQSLQRGECEAAFAGGVNVSIHPNKYLMLGQNKFMSSKGRCESFGQGGDGYVPGEGVGAVLLKPLSKAVEDGDHIYGIIKGTAINHGGKTNGYSVPNPNAQADVIKKAFVEAKVDPRTVSYIEAHGTGTSLGDPIEITGLSKVFTQETDDKQFCAIGSAKSNIGHCESAAGIAGVTKVLLQMKYRQLAPSLHSNVLNPNIDFLNSPFKVQQELEEWKRPIISVNGKDIELPRIAGVSSFGAGGVNAHILIEEYAPEPVEERLPARKQPAVIVLSAKNEERLQKRAERLLHAIREQTYVEADLHRIAYTLQVGREAMKERLAFVAETMQELEEKLYECISGTENREYVYRGQVKSNKEAIAAFAADEDMSKTIEAWLQKGKYAKVLDLWVRGLRIDWSTLYQDQKPRRISLPAYPFARDRYWIDVNAKAEEKRTEEPFAPVQPVIPKPSVDREASGKPANITLQPLMTNQDRLERVPSDTETETITAEALCDELTAGLAEVLYMDQNEIDPDEAFIDIGMDSITGLEWIKAINKQYGTSLNVTKVYDYPTTRDFAVYLAHELSTQAGEKKQTETYTPIRQKTVVPAAKPANISLQPLEHHQPVQEEAEETIQYAAAEISASRQYTVAIETLHENLRESIADVLYMEPYEVDIDEAFIDIGMDSITGLEWIKAVNKQYGTSFTVTRVYDYPTIRDFAEMLKSELGTHLDRKIEHTDSFEAAQQKPAASSHPKPAERPLQPVQHPIKKEHEKKTVPVLQDRPEDAIAIVGMSGRYPGARNVREYWDNLVHARNAIRDIPTSRWDVDKYYDPVLNKKGKVYCKSMGMLDDIEHFDPLFFNIPPSEAELMDPQHRIFLQEGYKAFEDAGYNARTLNEKKCGVYLGIMSNEYGVMLNRQSRANATGNSFAIAAARIPYFLNLKGPAIPIDTACSSSLVGTHLARQALINKEIDMALVGGVSLYLTPESYMSMCEAGMLSPDGQCKAFDNGANGFVPGEGAGALVLKRLKDAEADRDHIYGIIIGSGINQDGKTNGITAPSAKSQMDLERDIYETYGIHPESISYVEMHGTGTKQGDPIELEALSTVFQEKTDKKQFCAIGSVKSNIGHTSAAAGVAGVQKVLLCMNHKTLVPTLNFTTPNEHFEFEHSPLYVNTELKPWETADGKPRRACVSSFGYSGTNAHIVIEEYQPEKRNDRLTKQHRSALFVLSAKKEKQLKAYAEAMKDFVTSNEDIDLEDMAYTLQTGREAMDYRMAFLADSREMLIKALDDYLAEMPNGSIFAAHVKTKKSEIKLFETDHDAKALLQTWIEKKRLEKVAELWVKGLQIDWNKLYGEYTPRRISLPAYPFAEEYYWLPTQEGEPETIATAMPQFELMPKRCFLRKQWQPCPIEPAEMTNQTVAILANEETMALAEELSAYFSTYRIFDSQELDRVSAADYEHVAGAIDLIGCGTSHEHSMGWINWLQKLIEQGRASKHHLTVLGVTKGLEAYANEGVLLSGASRAGLYRMLQSEYSHLTSRHADMECEASHEELARLIAVEYYAKSTESEVCYRNGQRYRAYLTEQPAEAALSHKQVSFSTDKVLLITGGTRGLGLLCARHFVKTYGVKRLVLIGREELPPRDQWNSVKISSLAEKIKAVQELEDMGAQVQVLSLDLTDRVAVEQSLKTIHETMGAIGGVIHCAGMVNKQNPAFIRKSLEEIGQVLEPKVEGLQTLFDLLQDEPLAFFTLFSSVSAAIPALAAGQADYAMANAFMDYFAEAHQDKCPIVSIQWPNWKETGLGEVRSKALEQTGLISLTNDEGLQLLDQILSDRQYAVVLPAVPDTNVWKPDKLMQPSLPVEALSHPETKEQTSTRNLFPETVDWLVTLFSDELKIAAEDFETDEPFQEYGIDSIILAQLVQQMNQQLNGDIDPSILFEYPTIESFAHWLISKYDISAVLQPSVPEKQTPLKPQSAMKQKLVPEQRPQQISHEKTALLAEDIAIIGLSCRFPGAETLEEYWDLIRDGRSAIAPVPPERFGNSSSNYAGLIDEMNRFDHDFFMMSESDVRAMDPQALAVLEESLKLWYHAGYTEKEVKGMRAGVYIGGRSQHKPDPASLSKAKNPIVAGGQNYLAANISQFFDLKGPSIVLDTACSSALVGLNMAIQALRSGDIEAAVVGGVSLLDADAHRMFHERGLLCDKPSFHIFDKRADGVILGEGVGMVLVKTVNQAVEDGDSIYAVIKAAAINNDGRTAGPSSPNLEAQKDVMLSALEKSGKKTEEISYLEANGSGSAVTDLLELKAIQSIYRSESKAPLGLGSVKPNIGHPLCAEGIASLIKVALMLKHRQLVPFLSGNENMPYFDIEKTDLYFSRSQAEWKETTPAAAINCFADGGTNAHLIIEGWRDSAERPIRRKPLPLPELNRQPVLIKPSAQNVQKKVHSDTGASKDMFWKTFK.

The N-terminal hotdog fold 1 stretch occupies residues 1-123 (MRWRSNVKKI…ADMHADSPAI (123 aa)). A PKS/mFAS DH 1 domain is found at 1 to 285 (MRWRSNVKKI…SKLVREAELI (285 aa)). Residue His-26 is the Proton acceptor; for dehydratase activity 1 of the active site. Residues 138-285 (QNVVQLDDVY…SKLVREAELI (148 aa)) form a C-terminal hotdog fold 1 region. Residue Asp-199 is the Proton donor; for dehydratase activity 1 of the active site. A disordered region spans residues 289-314 (HQDAQETQMTRADTAERDKPADMVSS). Residues 320–394 (SEAEQFVSQL…ELSAFLAEEY (75 aa)) enclose the Carrier 1 domain. Position 354 is an O-(pantetheine 4'-phosphoryl)serine (Ser-354). In terms of domain architecture, Ketosynthase family 3 (KS3) 1 spans 433 to 871 (AGDIAIIGLA…GSNAHIILEE (439 aa)). Residues Cys-609, His-744, and His-784 each act as for beta-ketoacyl synthase 1 activity in the active site. Residues 1048–1226 (HILHPLLHQN…DSLYAGENGV (179 aa)) form a dehydratase region. The tract at residues 1051–1175 (HPLLHQNVSD…GSAVLCEAGE (125 aa)) is N-terminal hotdog fold 2. The PKS/mFAS DH 2 domain occupies 1051–1340 (HPLLHQNVSD…ARVLETDQEG (290 aa)). Catalysis depends on His-1080, which acts as the Proton acceptor; for dehydratase activity 2. A C-terminal hotdog fold 2 region spans residues 1189-1340 (NGRTLSPFDC…ARVLETDQEG (152 aa)). Asp-1251 serves as the catalytic Proton donor; for dehydratase activity 2. The beta-ketoacyl reductase 1 stretch occupies residues 1520–1713 (KGVYLITGGA…WKDGGMQIDA (194 aa)). The 74-residue stretch at 1800 to 1873 (EKAENYFKQV…SLTRYFIDSR (74 aa)) folds into the Carrier 2 domain. O-(pantetheine 4'-phosphoryl)serine is present on Ser-1834. Residues 1926–2365 (TEEIAIIGIS…GVNAHILIEE (440 aa)) form the Ketosynthase family 3 (KS3) 2 domain. Residues Cys-2103, His-2238, and His-2278 each act as for beta-ketoacyl synthase 2 activity in the active site. The segment at 2546–2568 (TEEPFAPVQPVIPKPSVDREASG) is disordered. 2 Carrier domains span residues 2597-2674 (ITAE…AHEL) and 2738-2815 (VAIE…KSEL). An O-(pantetheine 4'-phosphoryl)serine mark is found at Ser-2634 and Ser-2775. A disordered region spans residues 2828-2854 (SFEAAQQKPAASSHPKPAERPLQPVQH). The Ketosynthase family 3 (KS3) 3 domain maps to 2873-3294 (EDAIAIVGMS…GTNAHIVIEE (422 aa)). Active-site for beta-ketoacyl synthase 3 activity residues include Cys-3040, His-3175, and His-3215. Residues 3686–3887 (DKVLLITGGT…PNWKETGLGE (202 aa)) form a beta-ketoacyl reductase 2 region. The Carrier 5 domain maps to 3960–4037 (NLFPETVDWL…SFAHWLISKY (78 aa)). An O-(pantetheine 4'-phosphoryl)serine modification is found at Ser-3997. The region spanning 4082 to 4485 (AEDIAIIGLS…GTNAHLIIEG (404 aa)) is the Ketosynthase family 3 (KS3) 4 domain. Catalysis depends on Cys-4237, which acts as the For beta-ketoacyl synthase 4 activity.

Pantetheine 4'-phosphate is required as a cofactor.

The protein localises to the cytoplasm. It participates in antibiotic biosynthesis; bacillaene biosynthesis. In terms of biological role, involved in some intermediate steps for the synthesis of the antibiotic polyketide bacillaene which is involved in secondary metabolism. The sequence is that of Polyketide synthase PksL (pksL) from Bacillus subtilis (strain 168).